The following is a 47-amino-acid chain: Large ribosomal subunit protein eL40 (47 aa).

Belongs to the eukaryotic ribosomal protein eL40 family.

This chain is Large ribosomal subunit protein eL40, found in Methanococcus aeolicus (strain ATCC BAA-1280 / DSM 17508 / OCM 812 / Nankai-3).